The sequence spans 226 residues: Putative N-acetylmannosamine-6-phosphate 2-epimerase (226 aa).

It belongs to the NanE family.

It catalyses the reaction an N-acyl-D-glucosamine 6-phosphate = an N-acyl-D-mannosamine 6-phosphate. Its pathway is amino-sugar metabolism; N-acetylneuraminate degradation; D-fructose 6-phosphate from N-acetylneuraminate: step 3/5. Its function is as follows. Converts N-acetylmannosamine-6-phosphate (ManNAc-6-P) to N-acetylglucosamine-6-phosphate (GlcNAc-6-P). The chain is Putative N-acetylmannosamine-6-phosphate 2-epimerase from Mycoplasma capricolum subsp. capricolum (strain California kid / ATCC 27343 / NCTC 10154).